A 174-amino-acid polypeptide reads, in one-letter code: Guided entry of tail-anchored proteins factor 1 (174 aa).

Over 1 to 8 the chain is Lumenal; that stretch reads MSSAAADH. The chain crosses the membrane as a helical span at residues 9–29; sequence WAWLLVLSFVFGCNVLRILLP. Topologically, residues 30–99 are cytoplasmic; the sequence is SFSSFMSRVL…VKARTAQLAK (70 aa). Residues 39-94 are a coiled coil; that stretch reads LQKDAEQESQMRAEIQDMKQELSTVNMMDEFARYARLERKINKMTDKLKTHVKART. The interval 39–97 is interaction with GET3/TRC40; it reads LQKDAEQESQMRAEIQDMKQELSTVNMMDEFARYARLERKINKMTDKLKTHVKARTAQL. The helical transmembrane segment at 100–120 threads the bilayer; that stretch reads IKWVISVAFYVLQAALMISLI. The Lumenal segment spans residues 121–148; it reads WKYYSVPVAVVPSKWITPLDRLVAFPTR. A helical transmembrane segment spans residues 149 to 169; it reads VAGGVGITCWILVCNKVVAIV. Residues 170 to 174 are Cytoplasmic-facing; the sequence is LHPFS.

It belongs to the WRB/GET1 family. Component of the Golgi to ER traffic (GET) complex, which is composed of GET1/WRB, CAMLG/GET2 and GET3/TRC40. Within the complex, GET1 and CAMLG form a heterotetramer which is stabilized by phosphatidylinositol binding and which binds to the GET3 homodimer. Interacts with CAMLG (via C-terminus). GET3 shows a higher affinity for CAMLG than for GET1.

Its subcellular location is the endoplasmic reticulum membrane. In terms of biological role, required for the post-translational delivery of tail-anchored (TA) proteins to the endoplasmic reticulum (ER). Together with CAMLG/GET2, acts as a membrane receptor for soluble GET3/TRC40, which recognizes and selectively binds the transmembrane domain of TA proteins in the cytosol. Required to ensure correct topology and ER insertion of CAMLG. The sequence is that of Guided entry of tail-anchored proteins factor 1 from Homo sapiens (Human).